A 420-amino-acid chain; its full sequence is Putative RNA-binding protein Alsin2 (420 aa).

Residues 99–130 (IADCDRRTDSAKQRLKETQEELTAEVAEKANA) are a coiled coil. 3 stretches are compositionally biased toward basic and acidic residues: residues 242–259 (AELK…EGRG), 282–363 (RERQ…RFGD), and 373–399 (HHRD…HFRD). Residues 242–420 (AELKRTGKMT…SYSRERNYRR (179 aa)) form a disordered region.

This sequence belongs to the Luc7 family. In terms of assembly, interacts with x16 (via Arg/Ser-rich region).

In terms of biological role, may bind to RNA via its Arg/Ser-rich domain. The sequence is that of Putative RNA-binding protein Alsin2 from Drosophila melanogaster (Fruit fly).